A 343-amino-acid chain; its full sequence is Putative trace amine-associated receptor 3 (343 aa).

Topologically, residues 1–35 (MDLTYIPEDLSSCPKFVNKILSSHQPLFSCPGDNV) are extracellular. A helical membrane pass occupies residues 36-56 (FGYDWSHDYPLFGNLVIMVSI). Residues 57–68 (SHFKQLHSPTNF) lie on the Cytoplasmic side of the membrane. Residues 69–89 (LILSMATTDFLLGFVIMPYSI) traverse the membrane as a helical segment. Topologically, residues 90–150 (MRSVESCWYF…TKMTNSTIKQ (61 aa)) are extracellular. An intrachain disulfide couples cysteine 104 to cysteine 189. Asparagine 145 is a glycosylation site (N-linked (GlcNAc...) asparagine). Residues 151–168 (LLAFCWSVPALFSFGLVL) form a helical membrane-spanning segment. At 169–172 (SEAD) the chain is on the cytoplasmic side. Residues 173-186 (VSGMQSYKILVACF) form an extracellular Loop 2 (ECL2) region. The helical transmembrane segment at 173 to 193 (VSGMQSYKILVACFNFCALTF) threads the bilayer. Over 194-198 (NKFWG) the chain is Extracellular. A helical transmembrane segment spans residues 199 to 223 (TILFTTCFFTPGSIMVGIYGKIFIV). The Cytoplasmic portion of the chain corresponds to 224–257 (SKQHARVISHVPENTKGAVKKHLSKKKDRKAAKT). The helical transmembrane segment at 258 to 278 (LGIVMGVFLACWLPCFLAVLI) threads the bilayer. The Extracellular segment spans residues 279-287 (DPYLDYSTP). Residues 288–308 (ILILDLLVWLRYFNSTCNPLI) traverse the membrane as a helical segment. The Cytoplasmic segment spans residues 309 to 343 (HGFFNPWFQKAFKYIVSGKIFSSHSETANLFPEAH).

This sequence belongs to the G-protein coupled receptor 1 family. Not expressed in the pons, thalamus, globus pallidus, caudate, putamen or cerebellum.

It localises to the cell membrane. In terms of biological role, putative olfactory receptor activated by several primary trace amines. The sequence is that of Putative trace amine-associated receptor 3 from Homo sapiens (Human).